A 65-amino-acid chain; its full sequence is Large ribosomal subunit protein bL35 (65 aa).

It belongs to the bacterial ribosomal protein bL35 family.

The chain is Large ribosomal subunit protein bL35 from Edwardsiella ictaluri (strain 93-146).